A 302-amino-acid chain; its full sequence is Probable 2-(5''-triphosphoribosyl)-3'-dephosphocoenzyme-A synthase 1 (302 aa).

The protein belongs to the CitG/MdcB family.

It carries out the reaction 3'-dephospho-CoA + ATP = 2'-(5''-triphospho-alpha-D-ribosyl)-3'-dephospho-CoA + adenine. The polypeptide is Probable 2-(5''-triphosphoribosyl)-3'-dephosphocoenzyme-A synthase 1 (Salmonella typhimurium (strain LT2 / SGSC1412 / ATCC 700720)).